A 711-amino-acid polypeptide reads, in one-letter code: Polyribonucleotide nucleotidyltransferase (711 aa).

2 residues coordinate Mg(2+): aspartate 486 and aspartate 492. The 60-residue stretch at 553–612 (PRIHTIKINPDKIKDVIGKGGSVIRALTEETGTTIEIEDDGTVKIAATDGEKAKHAIRRI) folds into the KH domain. Residues 622–690 (GRVYTGKVTR…RQGRIRLSIK (69 aa)) enclose the S1 motif domain. Residues 689–711 (IKEATEQSQPAAAPEAPAAEQGE) are disordered. A compositionally biased stretch (low complexity) spans 694 to 711 (EQSQPAAAPEAPAAEQGE).

Belongs to the polyribonucleotide nucleotidyltransferase family. In terms of assembly, component of the RNA degradosome, which is a multiprotein complex involved in RNA processing and mRNA degradation. Requires Mg(2+) as cofactor.

Its subcellular location is the cytoplasm. The enzyme catalyses RNA(n+1) + phosphate = RNA(n) + a ribonucleoside 5'-diphosphate. Functionally, involved in mRNA degradation. Catalyzes the phosphorolysis of single-stranded polyribonucleotides processively in the 3'- to 5'-direction. This is Polyribonucleotide nucleotidyltransferase from Escherichia coli (strain SE11).